The sequence spans 338 residues: Ketol-acid reductoisomerase (NADP(+)) (338 aa).

The KARI N-terminal Rossmann domain occupies Met1–Thr181. Residues Tyr24–Gln27, Arg47, and Ser52 contribute to the NADP(+) site. His107 is an active-site residue. Residue Gly133 coordinates NADP(+). The KARI C-terminal knotted domain occupies Asn182–Ile327. Asp190, Glu194, Glu226, and Glu230 together coordinate Mg(2+). Ser251 lines the substrate pocket.

It belongs to the ketol-acid reductoisomerase family. The cofactor is Mg(2+).

The enzyme catalyses (2R)-2,3-dihydroxy-3-methylbutanoate + NADP(+) = (2S)-2-acetolactate + NADPH + H(+). It catalyses the reaction (2R,3R)-2,3-dihydroxy-3-methylpentanoate + NADP(+) = (S)-2-ethyl-2-hydroxy-3-oxobutanoate + NADPH + H(+). Its pathway is amino-acid biosynthesis; L-isoleucine biosynthesis; L-isoleucine from 2-oxobutanoate: step 2/4. It participates in amino-acid biosynthesis; L-valine biosynthesis; L-valine from pyruvate: step 2/4. In terms of biological role, involved in the biosynthesis of branched-chain amino acids (BCAA). Catalyzes an alkyl-migration followed by a ketol-acid reduction of (S)-2-acetolactate (S2AL) to yield (R)-2,3-dihydroxy-isovalerate. In the isomerase reaction, S2AL is rearranged via a Mg-dependent methyl migration to produce 3-hydroxy-3-methyl-2-ketobutyrate (HMKB). In the reductase reaction, this 2-ketoacid undergoes a metal-dependent reduction by NADPH to yield (R)-2,3-dihydroxy-isovalerate. In Cupriavidus pinatubonensis (strain JMP 134 / LMG 1197) (Cupriavidus necator (strain JMP 134)), this protein is Ketol-acid reductoisomerase (NADP(+)).